The sequence spans 518 residues: Serine hydroxymethyltransferase, mitochondrial (518 aa).

Residues 1-31 constitute a mitochondrion transit peptide; it reads MAMAMALRKLSSSVNKSSRPLFSASSLYYKS. Lys287 carries the N6-(pyridoxal phosphate)lysine modification.

The protein belongs to the SHMT family. As to quaternary structure, homotetramer. Requires pyridoxal 5'-phosphate as cofactor.

The protein localises to the mitochondrion. It catalyses the reaction (6R)-5,10-methylene-5,6,7,8-tetrahydrofolate + glycine + H2O = (6S)-5,6,7,8-tetrahydrofolate + L-serine. Its pathway is one-carbon metabolism; tetrahydrofolate interconversion. In terms of biological role, catalyzes the interconversion of serine and glycine. The chain is Serine hydroxymethyltransferase, mitochondrial from Pisum sativum (Garden pea).